The following is a 426-amino-acid chain: Glutamyl-tRNA reductase (426 aa).

Substrate is bound by residues 49-52 (TCNR), serine 109, 114-116 (EGQ), and glutamine 120. Residue cysteine 50 is the Nucleophile of the active site. 189–194 (GAGETG) is a binding site for NADP(+).

The protein belongs to the glutamyl-tRNA reductase family. As to quaternary structure, homodimer.

The enzyme catalyses (S)-4-amino-5-oxopentanoate + tRNA(Glu) + NADP(+) = L-glutamyl-tRNA(Glu) + NADPH + H(+). It functions in the pathway porphyrin-containing compound metabolism; protoporphyrin-IX biosynthesis; 5-aminolevulinate from L-glutamyl-tRNA(Glu): step 1/2. In terms of biological role, catalyzes the NADPH-dependent reduction of glutamyl-tRNA(Glu) to glutamate 1-semialdehyde (GSA). The sequence is that of Glutamyl-tRNA reductase (hemA) from Chlorobaculum parvum (strain DSM 263 / NCIMB 8327) (Chlorobium vibrioforme subsp. thiosulfatophilum).